Here is a 285-residue protein sequence, read N- to C-terminus: Homeobox protein Hox-A13b (285 aa).

A DNA-binding region (homeobox) is located at residues 219–278; it reads GRKKRVPYTKVQLKELEREYAANKFITKDKRRRISAQTNLTERQVTIWFQNRRVKEKKVV.

The protein belongs to the Abd-B homeobox family.

It localises to the nucleus. Functionally, sequence-specific transcription factor which is part of a developmental regulatory system that provides cells with specific positional identities on the anterior-posterior axis. This Takifugu rubripes (Japanese pufferfish) protein is Homeobox protein Hox-A13b (hoxa13b).